The chain runs to 38 residues: Anthranilate phosphoribosyltransferase (38 aa).

It belongs to the anthranilate phosphoribosyltransferase family. As to quaternary structure, homodimer.

The catalysed reaction is N-(5-phospho-beta-D-ribosyl)anthranilate + diphosphate = 5-phospho-alpha-D-ribose 1-diphosphate + anthranilate. Its pathway is amino-acid biosynthesis; L-tryptophan biosynthesis; L-tryptophan from chorismate: step 2/5. In terms of biological role, catalyzes the transfer of the phosphoribosyl group of 5-phosphorylribose-1-pyrophosphate (PRPP) to anthranilate to yield N-(5'-phosphoribosyl)-anthranilate (PRA). The polypeptide is Anthranilate phosphoribosyltransferase (trpD) (Serratia marcescens).